The sequence spans 120 residues: Small ribosomal subunit protein uS13 (120 aa).

A disordered region spans residues 93–120; that stretch reads RKGLPVRGQTTKNNARTRKGKKKTVGSK. The segment covering 107–120 has biased composition (basic residues); it reads ARTRKGKKKTVGSK.

It belongs to the universal ribosomal protein uS13 family. Part of the 30S ribosomal subunit. Forms a loose heterodimer with protein S19. Forms two bridges to the 50S subunit in the 70S ribosome.

Functionally, located at the top of the head of the 30S subunit, it contacts several helices of the 16S rRNA. In the 70S ribosome it contacts the 23S rRNA (bridge B1a) and protein L5 of the 50S subunit (bridge B1b), connecting the 2 subunits; these bridges are implicated in subunit movement. Contacts the tRNAs in the A and P-sites. The polypeptide is Small ribosomal subunit protein uS13 (Helicobacter pylori (strain P12)).